The following is a 500-amino-acid chain: Betaine aldehyde dehydrogenase, chloroplastic (500 aa).

The N-terminal 7 residues, 1–7, are a transit peptide targeting the chloroplast; sequence MSMPIPS. Position 238–243 (238–243) interacts with NAD(+); sequence GSSATG. Glu-260 (proton acceptor) is an active-site residue. The active-site Nucleophile is the Cys-294.

It belongs to the aldehyde dehydrogenase family. As to quaternary structure, homodimer.

The protein localises to the plastid. The protein resides in the chloroplast. The catalysed reaction is betaine aldehyde + NAD(+) + H2O = glycine betaine + NADH + 2 H(+). It functions in the pathway amine and polyamine biosynthesis; betaine biosynthesis via choline pathway; betaine from betaine aldehyde: step 1/1. This Beta vulgaris (Sugar beet) protein is Betaine aldehyde dehydrogenase, chloroplastic.